The following is an 862-amino-acid chain: DNA mismatch repair protein MutS (862 aa).

Residue 608–615 (GPNMAGKS) participates in ATP binding.

This sequence belongs to the DNA mismatch repair MutS family.

Functionally, this protein is involved in the repair of mismatches in DNA. It is possible that it carries out the mismatch recognition step. This protein has a weak ATPase activity. The protein is DNA mismatch repair protein MutS of Bacteroides thetaiotaomicron (strain ATCC 29148 / DSM 2079 / JCM 5827 / CCUG 10774 / NCTC 10582 / VPI-5482 / E50).